The primary structure comprises 376 residues: Eugenol O-methyltransferase (376 aa).

S-adenosyl-L-methionine contacts are provided by Gly219, Asp242, Met263, and Lys276. His280 serves as the catalytic Proton acceptor.

The protein belongs to the class I-like SAM-binding methyltransferase superfamily. Cation-independent O-methyltransferase family. COMT subfamily. Homodimer. As to expression, expressed predominantly in root hairs.

The catalysed reaction is (E)-isoeugenol + S-adenosyl-L-methionine = (E)-isomethyleugenol + S-adenosyl-L-homocysteine + H(+). Its function is as follows. O-methyltransferase. Substrate preference is eugenol &gt;&gt; orcinol monomethyl ether &gt; resorcinol monomethyl ether. In Sorghum bicolor (Sorghum), this protein is Eugenol O-methyltransferase (EOMT).